The chain runs to 36 residues: Pancreatic polypeptide (36 aa).

A Tyrosine amide modification is found at Tyr-36.

It belongs to the NPY family.

The protein localises to the secreted. In terms of biological role, hormone secreted by pancreatic cells that acts as a regulator of pancreatic and gastrointestinal functions probably by signaling through the G protein-coupled receptor NPY4R2. The sequence is that of Pancreatic polypeptide (PPY) from Oryctolagus cuniculus (Rabbit).